Here is a 697-residue protein sequence, read N- to C-terminus: SPX domain-containing membrane protein OsI_08463 (697 aa).

One can recognise an SPX domain in the interval 2-145; sequence VNFGKRLMAD…GYKFTDYYVS (144 aa). 11 helical membrane-spanning segments follow: residues 247 to 267, 278 to 298, 315 to 335, 338 to 356, 375 to 395, 411 to 431, 513 to 533, 544 to 564, 576 to 596, 604 to 624, and 670 to 690; these read FMSL…TYII, LGAA…AQVF, LVFS…AYDV, LTVL…ARAV, AGFV…AGLL, LPGW…WISF, LLIY…SSVV, TVAM…VIVG, ILVA…RFTS, VSSA…NLSL, and LLNV…VATF.

This sequence belongs to the major facilitator superfamily.

The protein localises to the membrane. This chain is SPX domain-containing membrane protein OsI_08463, found in Oryza sativa subsp. indica (Rice).